Consider the following 371-residue polypeptide: Protein NDRG2 (371 aa).

The segment at 1-21 is disordered; that stretch reads MAELQEVQITEEKPLLPGQTP. A2 is subject to N-acetylalanine. T20 is subject to Phosphothreonine. Residues S326 and S328 each carry the phosphoserine modification. Position 330 is a phosphothreonine (T330). S332 carries the post-translational modification Phosphoserine. T334 is subject to Phosphothreonine. The segment at 334–371 is disordered; sequence TSAASVDGNRSRSRTLSQSSESGTLSSGPPGHTMEVSC. 3 positions are modified to phosphoserine: S335, S338, and S344. Residues 347–361 show a composition bias toward low complexity; the sequence is RTLSQSSESGTLSSG. T348 carries the phosphothreonine modification. Phosphoserine is present on residues S350, S352, S353, and S355. A Phosphothreonine modification is found at T357. S370 carries the post-translational modification Phosphoserine.

Belongs to the NDRG family. Interacts with CTNNB1. In terms of tissue distribution, highly expressed in brain, heart, skeletal muscle and salivary gland, and moderately in kidney and liver. Expressed in dendritic cells, but not in other blood cells. Expression levels are low in pancreatic and liver cancer tissues; absent in meningioma. Expressed in low-grade gliomas but present at low levels in glioblastoma. Isoform 1 and isoform 2 are present in brain neurons and up-regulated in Alzheimer disease (at protein level).

The protein localises to the cytoplasm. The protein resides in the perinuclear region. It is found in the cell projection. It localises to the growth cone. In terms of biological role, contributes to the regulation of the Wnt signaling pathway. Down-regulates CTNNB1-mediated transcriptional activation of target genes, such as CCND1, and may thereby act as tumor suppressor. May be involved in dendritic cell and neuron differentiation. The protein is Protein NDRG2 (NDRG2) of Homo sapiens (Human).